The sequence spans 149 residues: Calmodulin-2 (149 aa).

EF-hand domains are found at residues 8–43 (DQISEFKEAFSLFDKDGDGCITTKELGTVMRSLGQN), 44–79 (PTEAELQDMINEVDADGNGTIDFPEFLNLMARKMKD), 81–116 (DSEEELKEAFRVFDKDQNGFISAAELRHVMTNLGEK), and 117–149 (LTDEEVDEMIKEADVDGDGQINYEEFVKVMMAK). Residues Asp21, Asp23, Asp25, Cys27, Glu32, Asp57, Asp59, Asn61, Thr63, Glu68, Asp94, Asp96, Asn98, Glu105, Asp130, Asp132, Asp134, Gln136, and Glu141 each coordinate Ca(2+).

It belongs to the calmodulin family. In terms of assembly, interacts with KCBP and CIP111. Binds to IQD1 and IQD20.

It is found in the cytoplasm. Its subcellular location is the cytoskeleton. Its function is as follows. Calmodulin mediates the control of a large number of enzymes, ion channels and other proteins by Ca(2+). Among the enzymes to be stimulated by the calmodulin-Ca(2+) complex are a number of protein kinases and phosphatases. In Arabidopsis thaliana (Mouse-ear cress), this protein is Calmodulin-2 (CAM2).